A 486-amino-acid polypeptide reads, in one-letter code: Palmitoleoyl-protein carboxylesterase notum2 (486 aa).

Positions 1–18 are cleaved as a signal peptide; it reads MRILEIFAILLILKEVRP. The N-linked (GlcNAc...) asparagine glycan is linked to Asn183. Active-site charge relay system residues include Ser223, Asp331, and His380.

Belongs to the pectinacetylesterase family. Notum subfamily.

The protein localises to the secreted. It carries out the reaction [Wnt protein]-O-(9Z)-hexadecenoyl-L-serine + H2O = [Wnt protein]-L-serine + (9Z)-hexadecenoate + H(+). Functionally, carboxylesterase that acts as a key negative regulator of the Wnt signaling pathway by specifically mediating depalmitoleoylation of WNT proteins. Serine palmitoleoylation of WNT proteins is required for efficient binding to frizzled receptors. The polypeptide is Palmitoleoyl-protein carboxylesterase notum2 (Xenopus laevis (African clawed frog)).